The following is a 424-amino-acid chain: Deoxyguanosinetriphosphate triphosphohydrolase-like protein (424 aa).

Positions Met1–Val27 are disordered. A compositionally biased stretch (basic and acidic residues) spans Asp8–Lys18. The HD domain occupies Arg67–Ser217.

The protein belongs to the dGTPase family. Type 2 subfamily.

The polypeptide is Deoxyguanosinetriphosphate triphosphohydrolase-like protein (dgt) (Corynebacterium glutamicum (strain ATCC 13032 / DSM 20300 / JCM 1318 / BCRC 11384 / CCUG 27702 / LMG 3730 / NBRC 12168 / NCIMB 10025 / NRRL B-2784 / 534)).